The following is a 337-amino-acid chain: DNA-directed RNA polymerase subunit alpha (337 aa).

The segment at methionine 1–glutamate 233 is alpha N-terminal domain (alpha-NTD). Residues lysine 265 to phenylalanine 337 form an alpha C-terminal domain (alpha-CTD) region.

This sequence belongs to the RNA polymerase alpha chain family. In terms of assembly, in plastids the minimal PEP RNA polymerase catalytic core is composed of four subunits: alpha, beta, beta', and beta''. When a (nuclear-encoded) sigma factor is associated with the core the holoenzyme is formed, which can initiate transcription.

It localises to the plastid. Its subcellular location is the chloroplast. The enzyme catalyses RNA(n) + a ribonucleoside 5'-triphosphate = RNA(n+1) + diphosphate. Its function is as follows. DNA-dependent RNA polymerase catalyzes the transcription of DNA into RNA using the four ribonucleoside triphosphates as substrates. This is DNA-directed RNA polymerase subunit alpha from Acorus gramineus (Dwarf sweet flag).